Reading from the N-terminus, the 267-residue chain is MGSAFDPLVTATEDLAAVNSAPPLSNLTQEELKKIAAYKAVEFVESGMVIGLGTGSTAKHAVARISELLREGKLKDIIGIPTSTTTHEQAVSLGIPLSDLDSHPVVDLSIDGADEVDPALNLVKGRGGSLLREKMIEGASKKFVVIVDESKLVKYIGGSGLAVPVEVVPFCCDFTRGKLEELFRDSGCVAKLRMKIGSNGEEAAPAVTDNRNYVVDLYLERDIGDLEVASEAILRFPGVVEHGMFLGMATTLIVAGKFGVTVKDRFG.

G2 carries the N-acetylglycine modification. S92 carries the post-translational modification Phosphoserine.

The protein belongs to the ribose 5-phosphate isomerase family. In terms of tissue distribution, expressed in roots, cotyledons, leaves and flowers.

Its subcellular location is the cytoplasm. It carries out the reaction aldehydo-D-ribose 5-phosphate = D-ribulose 5-phosphate. The protein operates within carbohydrate degradation; pentose phosphate pathway; D-ribose 5-phosphate from D-ribulose 5-phosphate (non-oxidative stage): step 1/1. Catalyzes the reversible conversion of ribose-5-phosphate to ribulose 5-phosphate. The chain is Probable ribose-5-phosphate isomerase 1 (RPI1) from Arabidopsis thaliana (Mouse-ear cress).